The sequence spans 57 residues: uncharacterized protein (57 aa).

Positions 1–57 (MANHRGGSGNFAEDRERASEAGKKGGQHSGGNFKNDPQRASEAGKKGGKSSHGKSDN) are disordered. Composition is skewed to basic and acidic residues over residues 12-23 (AEDRERASEAGK) and 36-45 (DPQRASEAGK). The span at 46–57 (KGGKSSHGKSDN) shows a compositional bias: basic residues.

It belongs to the con-10 family.

This is an uncharacterized protein from Escherichia coli (strain K12).